Here is a 118-residue protein sequence, read N- to C-terminus: Large ribosomal subunit protein bL20 (118 aa).

This sequence belongs to the bacterial ribosomal protein bL20 family.

Functionally, binds directly to 23S ribosomal RNA and is necessary for the in vitro assembly process of the 50S ribosomal subunit. It is not involved in the protein synthesizing functions of that subunit. The chain is Large ribosomal subunit protein bL20 from Phenylobacterium zucineum (strain HLK1).